Here is a 183-residue protein sequence, read N- to C-terminus: Pyruvoyl-dependent arginine decarboxylase (183 aa).

S44 is modified (pyruvic acid (Ser)).

The protein belongs to the PdaD family. Pyruvate is required as a cofactor.

The enzyme catalyses L-arginine + H(+) = agmatine + CO2. The protein is Pyruvoyl-dependent arginine decarboxylase of Nitrosopumilus maritimus (strain SCM1).